Consider the following 42-residue polypeptide: Daisho1 (42 aa).

An N-terminal signal peptide occupies residues 1–20; that stretch reads MKFFQAAALLLAMFAALANA. Positions 21–26 are cleaved as a propeptide — removed by a dipeptidylpeptidase; it reads EPVPQP. The residue at position 41 (T41) is a Threonine amide.

As to expression, hemolymph (at protein level).

The protein localises to the secreted. In terms of biological role, peptide which plays a role in the humoral immune response to a subset of filamentous fungi, including F.oxysporum and F.verticillioides. This chain is Daisho1, found in Drosophila melanogaster (Fruit fly).